The sequence spans 229 residues: Ribonuclease 3 (229 aa).

The RNase III domain occupies 4-133 (WEELQESVGF…FIGALYLDNG (130 aa)). A Mg(2+)-binding site is contributed by glutamate 46. Aspartate 50 is an active-site residue. Mg(2+) is bound by residues aspartate 119 and glutamate 122. Glutamate 122 is an active-site residue. In terms of domain architecture, DRBM spans 159–228 (DYKTQLQEIV…AQFAINQLTH (70 aa)).

It belongs to the ribonuclease III family. As to quaternary structure, homodimer. Mg(2+) serves as cofactor.

It is found in the cytoplasm. The catalysed reaction is Endonucleolytic cleavage to 5'-phosphomonoester.. In terms of biological role, digests double-stranded RNA. Involved in the processing of primary rRNA transcript to yield the immediate precursors to the large and small rRNAs (23S and 16S). Processes some mRNAs, and tRNAs when they are encoded in the rRNA operon. Processes pre-crRNA and tracrRNA of type II CRISPR loci if present in the organism. This Listeria welshimeri serovar 6b (strain ATCC 35897 / DSM 20650 / CCUG 15529 / CIP 8149 / NCTC 11857 / SLCC 5334 / V8) protein is Ribonuclease 3.